We begin with the raw amino-acid sequence, 102 residues long: Defensin (102 aa).

The first 25 residues, 1-25 (MKCATIVCTIAVVLAATLLNGSVQA), serve as a signal peptide directing secretion. Residues 26–62 (APQEEAALSGGANLNTLLDELPEETHHAALENYRAKR) constitute a propeptide that is removed on maturation. 3 cysteine pairs are disulfide-bonded: Cys65-Cys92, Cys78-Cys98, and Cys82-Cys100.

This sequence belongs to the invertebrate defensin family. Type 1 subfamily.

Its subcellular location is the secreted. In terms of biological role, responsible for the anti Gram-positive activity of immune hemolymph. This Anopheles gambiae (African malaria mosquito) protein is Defensin (Def1).